The sequence spans 489 residues: Tripartite motif-containing protein 10 (489 aa).

The RING-type zinc finger occupies 16–61 (CPICQGTLREPVTIDCGHNFCRGCLTRYCEIPGPESEESLSCPLCK). A B box-type zinc finger spans residues 94–135 (EVEDACPEHGEKIYFFCEEDEAQLCVVCRETGQHGAHTVRFL). Residues Cys99, His102, Cys121, and His127 each coordinate Zn(2+). Residues 144–180 (EQIQKCLVCLRKEREEIQETQSRENKRIQVLLTQVAT) are a coiled coil. Residues 292 to 486 (QEMKTFLEKL…FSLSCQEGAV (195 aa)) enclose the B30.2/SPRY domain.

Belongs to the TRIM/RBCC family. As to quaternary structure, interacts with IFNAR1; this interaction prevents association of IFNAR1 with TYK2. In terms of tissue distribution, expressed in embryonic liver.

It localises to the cytoplasm. Functionally, E3 ligase that plays an essential role in the differentiation and survival of terminal erythroid cells. May directly bind to PTEN and promote its ubiquitination, resulting in its proteasomal degradation and activation of hypertrophic signaling. In addition, plays a role in immune response regulation by repressing the phosphorylation of STAT1 and STAT2 in the interferon/JAK/STAT signaling pathway independent of its E3 ligase activity. Mechanistically, interacts with the intracellular domain of IFNAR1 and thereby inhibits the association between TYK2 and IFNAR1. The polypeptide is Tripartite motif-containing protein 10 (Trim10) (Mus musculus (Mouse)).